The primary structure comprises 429 residues: Serum response factor-binding protein 1 (429 aa).

At Ala-2 the chain carries N-acetylalanine. Coiled coils occupy residues 42-67 (KGTEDALLKNQRRAQRLLEEIHAMKE) and 108-144 (LLKKKIDVLKAAVQAFKEARQNVTEVESSKNASEDNH). Composition is skewed to polar residues over residues 128–138 (QNVTEVESSKN) and 146–160 (KNTLYSNDNGSNLQR). Disordered stretches follow at residues 128–285 (QNVT…GDDF) and 311–429 (EKVF…TFDD). The span at 183 to 195 (NSKEKIAKMEHGP) shows a compositional bias: basic and acidic residues. A Glycyl lysine isopeptide (Lys-Gly) (interchain with G-Cter in SUMO2) cross-link involves residue Lys-190. 5 positions are modified to phosphoserine: Ser-203, Ser-205, Ser-264, Ser-279, and Ser-281. Residues 249–265 (GGEELCEEEKEYFDDST) show a composition bias toward acidic residues. Residues 311 to 341 (EKVFLKEDTGETHGDTRNDKTKPSTETRKLE) are compositionally biased toward basic and acidic residues. A Glycyl lysine isopeptide (Lys-Gly) (interchain with G-Cter in SUMO2) cross-link involves residue Lys-316. Phosphoserine is present on residues Ser-349, Ser-351, and Ser-367. Basic and acidic residues predominate over residues 357–367 (NFKEQAPKTRS). The segment covering 373–383 (NEPQFKNQFNK) has biased composition (polar residues).

As to quaternary structure, interacts with SRF. Forms complexes with SRF and SRF cofactors ARID2, MYOCD and NKX2-5. Interacts with the N-terminus of SLC2A4.

The protein resides in the cytoplasm. The protein localises to the perinuclear region. Functionally, may be involved in regulating transcriptional activation of cardiac genes during the aging process. May play a role in biosynthesis and/or processing of SLC2A4 in adipose cells. The protein is Serum response factor-binding protein 1 of Pongo abelii (Sumatran orangutan).